Reading from the N-terminus, the 251-residue chain is Imidazole glycerol phosphate synthase subunit HisF (251 aa).

Active-site residues include aspartate 11 and aspartate 130.

The protein belongs to the HisA/HisF family. Heterodimer of HisH and HisF.

The protein resides in the cytoplasm. The enzyme catalyses 5-[(5-phospho-1-deoxy-D-ribulos-1-ylimino)methylamino]-1-(5-phospho-beta-D-ribosyl)imidazole-4-carboxamide + L-glutamine = D-erythro-1-(imidazol-4-yl)glycerol 3-phosphate + 5-amino-1-(5-phospho-beta-D-ribosyl)imidazole-4-carboxamide + L-glutamate + H(+). Its pathway is amino-acid biosynthesis; L-histidine biosynthesis; L-histidine from 5-phospho-alpha-D-ribose 1-diphosphate: step 5/9. In terms of biological role, IGPS catalyzes the conversion of PRFAR and glutamine to IGP, AICAR and glutamate. The HisF subunit catalyzes the cyclization activity that produces IGP and AICAR from PRFAR using the ammonia provided by the HisH subunit. The polypeptide is Imidazole glycerol phosphate synthase subunit HisF (Cytophaga hutchinsonii (strain ATCC 33406 / DSM 1761 / CIP 103989 / NBRC 15051 / NCIMB 9469 / D465)).